A 424-amino-acid chain; its full sequence is Serine--tRNA ligase (424 aa).

231–233 contacts L-serine; sequence TAE. 262 to 264 is an ATP binding site; sequence RSE. Residue E285 participates in L-serine binding. An ATP-binding site is contributed by 349 to 352; sequence EISS. Residue S385 coordinates L-serine.

This sequence belongs to the class-II aminoacyl-tRNA synthetase family. Type-1 seryl-tRNA synthetase subfamily. In terms of assembly, homodimer. The tRNA molecule binds across the dimer.

It localises to the cytoplasm. It catalyses the reaction tRNA(Ser) + L-serine + ATP = L-seryl-tRNA(Ser) + AMP + diphosphate + H(+). The enzyme catalyses tRNA(Sec) + L-serine + ATP = L-seryl-tRNA(Sec) + AMP + diphosphate + H(+). Its pathway is aminoacyl-tRNA biosynthesis; selenocysteinyl-tRNA(Sec) biosynthesis; L-seryl-tRNA(Sec) from L-serine and tRNA(Sec): step 1/1. Catalyzes the attachment of serine to tRNA(Ser). Is also able to aminoacylate tRNA(Sec) with serine, to form the misacylated tRNA L-seryl-tRNA(Sec), which will be further converted into selenocysteinyl-tRNA(Sec). The chain is Serine--tRNA ligase from Bacillus anthracis (strain A0248).